The chain runs to 336 residues: uncharacterized protein (336 aa).

This is an uncharacterized protein from Enterobacteria phage T4 (Bacteriophage T4).